The chain runs to 99 residues: Aspartyl/glutamyl-tRNA(Asn/Gln) amidotransferase subunit C (99 aa).

It belongs to the GatC family. Heterotrimer of A, B and C subunits.

It carries out the reaction L-glutamyl-tRNA(Gln) + L-glutamine + ATP + H2O = L-glutaminyl-tRNA(Gln) + L-glutamate + ADP + phosphate + H(+). The enzyme catalyses L-aspartyl-tRNA(Asn) + L-glutamine + ATP + H2O = L-asparaginyl-tRNA(Asn) + L-glutamate + ADP + phosphate + 2 H(+). In terms of biological role, allows the formation of correctly charged Asn-tRNA(Asn) or Gln-tRNA(Gln) through the transamidation of misacylated Asp-tRNA(Asn) or Glu-tRNA(Gln) in organisms which lack either or both of asparaginyl-tRNA or glutaminyl-tRNA synthetases. The reaction takes place in the presence of glutamine and ATP through an activated phospho-Asp-tRNA(Asn) or phospho-Glu-tRNA(Gln). This Mycolicibacterium vanbaalenii (strain DSM 7251 / JCM 13017 / BCRC 16820 / KCTC 9966 / NRRL B-24157 / PYR-1) (Mycobacterium vanbaalenii) protein is Aspartyl/glutamyl-tRNA(Asn/Gln) amidotransferase subunit C.